The following is a 73-amino-acid chain: Small ribosomal subunit protein bS18 (73 aa).

It belongs to the bacterial ribosomal protein bS18 family. Part of the 30S ribosomal subunit. Forms a tight heterodimer with protein bS6.

In terms of biological role, binds as a heterodimer with protein bS6 to the central domain of the 16S rRNA, where it helps stabilize the platform of the 30S subunit. The sequence is that of Small ribosomal subunit protein bS18 from Neorickettsia sennetsu (strain ATCC VR-367 / Miyayama) (Ehrlichia sennetsu).